The primary structure comprises 514 residues: Na(+)/H(+) antiporter NhaB (514 aa).

The next 12 helical transmembrane spans lie at 23–43, 52–72, 97–117, 120–140, 144–164, 202–222, 238–258, 303–323, 353–373, 391–411, 447–467, and 475–495; these read LALL…PFIA, IFTL…LLAI, LLLM…LFIF, LLLS…AAAF, FLDA…FYGI, LMMH…VGEP, FFLR…LTCL, ALIG…VGLI, FTAL…QSLF, LFYL…VGTI, ATPN…APLI, and VWMA…CVEF.

It belongs to the NhaB Na(+)/H(+) (TC 2.A.34) antiporter family.

The protein localises to the cell inner membrane. The catalysed reaction is 2 Na(+)(in) + 3 H(+)(out) = 2 Na(+)(out) + 3 H(+)(in). Functionally, na(+)/H(+) antiporter that extrudes sodium in exchange for external protons. The sequence is that of Na(+)/H(+) antiporter NhaB from Escherichia fergusonii (strain ATCC 35469 / DSM 13698 / CCUG 18766 / IAM 14443 / JCM 21226 / LMG 7866 / NBRC 102419 / NCTC 12128 / CDC 0568-73).